A 618-amino-acid polypeptide reads, in one-letter code: DNA mismatch repair protein MutL (618 aa).

Residues 367–381 are compositionally biased toward low complexity; the sequence is EPTAAREPATPRYSG. A disordered region spans residues 367–402; the sequence is EPTAAREPATPRYSGGASGGNGGRQSAGGWPHAQPG. The span at 382–392 shows a compositional bias: gly residues; the sequence is GASGGNGGRQS.

Belongs to the DNA mismatch repair MutL/HexB family.

Functionally, this protein is involved in the repair of mismatches in DNA. It is required for dam-dependent methyl-directed DNA mismatch repair. May act as a 'molecular matchmaker', a protein that promotes the formation of a stable complex between two or more DNA-binding proteins in an ATP-dependent manner without itself being part of a final effector complex. This chain is DNA mismatch repair protein MutL, found in Salmonella dublin (strain CT_02021853).